The chain runs to 463 residues: Hydroxyacid-oxoacid transhydrogenase, mitochondrial (463 aa).

The protein belongs to the iron-containing alcohol dehydrogenase family. Hydroxyacid-oxoacid transhydrogenase subfamily.

The protein localises to the mitochondrion. The catalysed reaction is (S)-3-hydroxybutanoate + 2-oxoglutarate = (R)-2-hydroxyglutarate + acetoacetate. It carries out the reaction 4-hydroxybutanoate + 2-oxoglutarate = (R)-2-hydroxyglutarate + succinate semialdehyde. In terms of biological role, catalyzes the cofactor-independent reversible oxidation of gamma-hydroxybutyrate (GHB) to succinic semialdehyde (SSA) coupled to reduction of 2-ketoglutarate (2-KG) to D-2-hydroxyglutarate (D-2-HG). L-3-hydroxybutyrate (L-3-OHB) is also a substrate for HOT when using 2-KG as hydrogen acceptor, resulting in the formation of D-2-HG. This is Hydroxyacid-oxoacid transhydrogenase, mitochondrial (adhfe1) from Xenopus tropicalis (Western clawed frog).